The chain runs to 165 residues: Small ribosomal subunit protein uS13 (165 aa).

The disordered stretch occupies residues 139–165; sequence GMTIGVARKKAAQPQSQQSSSQQQKSS. Positions 153 to 165 are enriched in low complexity; it reads QSQQSSSQQQKSS.

It belongs to the universal ribosomal protein uS13 family. In terms of assembly, part of the 30S ribosomal subunit. Forms a loose heterodimer with protein S19. Forms two bridges to the 50S subunit in the 70S ribosome.

Located at the top of the head of the 30S subunit, it contacts several helices of the 16S rRNA. In the 70S ribosome it contacts the 23S rRNA (bridge B1a) and protein L5 of the 50S subunit (bridge B1b), connecting the 2 subunits; these bridges are implicated in subunit movement. This chain is Small ribosomal subunit protein uS13, found in Saccharolobus solfataricus (strain ATCC 35092 / DSM 1617 / JCM 11322 / P2) (Sulfolobus solfataricus).